The primary structure comprises 564 residues: Proline--tRNA ligase (564 aa).

Belongs to the class-II aminoacyl-tRNA synthetase family. ProS type 1 subfamily. Homodimer.

It localises to the cytoplasm. The catalysed reaction is tRNA(Pro) + L-proline + ATP = L-prolyl-tRNA(Pro) + AMP + diphosphate. Its function is as follows. Catalyzes the attachment of proline to tRNA(Pro) in a two-step reaction: proline is first activated by ATP to form Pro-AMP and then transferred to the acceptor end of tRNA(Pro). As ProRS can inadvertently accommodate and process non-cognate amino acids such as alanine and cysteine, to avoid such errors it has two additional distinct editing activities against alanine. One activity is designated as 'pretransfer' editing and involves the tRNA(Pro)-independent hydrolysis of activated Ala-AMP. The other activity is designated 'posttransfer' editing and involves deacylation of mischarged Ala-tRNA(Pro). The misacylated Cys-tRNA(Pro) is not edited by ProRS. The sequence is that of Proline--tRNA ligase from Sulfurihydrogenibium sp. (strain YO3AOP1).